Consider the following 43-residue polypeptide: Protein PsbN (43 aa).

The chain crosses the membrane as a helical span at residues 5–27 (TLVAISISGLLVSFTGYALYTAF).

The protein belongs to the PsbN family.

Its subcellular location is the plastid. It is found in the chloroplast thylakoid membrane. May play a role in photosystem I and II biogenesis. This Eucalyptus globulus subsp. globulus (Tasmanian blue gum) protein is Protein PsbN.